A 189-amino-acid polypeptide reads, in one-letter code: uncharacterized protein (189 aa).

This is an uncharacterized protein from Danio rerio (Zebrafish).